The chain runs to 329 residues: GTP 3',8-cyclase (329 aa).

Residues 8–234 enclose the Radical SAM core domain; that stretch reads AFARKFYYLR…QLRQRSDGPA (227 aa). GTP is bound at residue arginine 17. [4Fe-4S] cluster contacts are provided by cysteine 24 and cysteine 28. Residue tyrosine 30 coordinates S-adenosyl-L-methionine. Cysteine 31 serves as a coordination point for [4Fe-4S] cluster. Residue arginine 68 participates in GTP binding. Glycine 72 provides a ligand contact to S-adenosyl-L-methionine. Threonine 99 is a binding site for GTP. Serine 123 contacts S-adenosyl-L-methionine. A GTP-binding site is contributed by lysine 160. An S-adenosyl-L-methionine-binding site is contributed by methionine 194. Cysteine 257 and cysteine 260 together coordinate [4Fe-4S] cluster. Residue 262–264 coordinates GTP; sequence RLR. Cysteine 274 is a binding site for [4Fe-4S] cluster.

This sequence belongs to the radical SAM superfamily. MoaA family. As to quaternary structure, monomer and homodimer. [4Fe-4S] cluster serves as cofactor.

The catalysed reaction is GTP + AH2 + S-adenosyl-L-methionine = (8S)-3',8-cyclo-7,8-dihydroguanosine 5'-triphosphate + 5'-deoxyadenosine + L-methionine + A + H(+). It participates in cofactor biosynthesis; molybdopterin biosynthesis. Its function is as follows. Catalyzes the cyclization of GTP to (8S)-3',8-cyclo-7,8-dihydroguanosine 5'-triphosphate. The protein is GTP 3',8-cyclase of Escherichia coli O139:H28 (strain E24377A / ETEC).